A 315-amino-acid chain; its full sequence is Thioredoxin reductase (315 aa).

An FAD-binding site is contributed by 45 to 52 (EGNTPGGK). Cysteine 145 and cysteine 148 are joined by a disulfide. Residue 288-297 (DCRSKSFRQI) participates in FAD binding.

This sequence belongs to the class-II pyridine nucleotide-disulfide oxidoreductase family. As to quaternary structure, homodimer. FAD is required as a cofactor.

The protein localises to the cytoplasm. It catalyses the reaction [thioredoxin]-dithiol + NADP(+) = [thioredoxin]-disulfide + NADPH + H(+). The sequence is that of Thioredoxin reductase (trxB) from Mycoplasma genitalium (strain ATCC 33530 / DSM 19775 / NCTC 10195 / G37) (Mycoplasmoides genitalium).